A 311-amino-acid polypeptide reads, in one-letter code: Methionyl-tRNA formyltransferase (311 aa).

110 to 113 (SLLP) provides a ligand contact to (6S)-5,6,7,8-tetrahydrofolate.

It belongs to the Fmt family.

The enzyme catalyses L-methionyl-tRNA(fMet) + (6R)-10-formyltetrahydrofolate = N-formyl-L-methionyl-tRNA(fMet) + (6S)-5,6,7,8-tetrahydrofolate + H(+). Attaches a formyl group to the free amino group of methionyl-tRNA(fMet). The formyl group appears to play a dual role in the initiator identity of N-formylmethionyl-tRNA by promoting its recognition by IF2 and preventing the misappropriation of this tRNA by the elongation apparatus. This chain is Methionyl-tRNA formyltransferase, found in Streptococcus pneumoniae (strain P1031).